Reading from the N-terminus, the 218-residue chain is Cytochrome b6 (218 aa).

The helical transmembrane segment at Ile-35–Phe-55 threads the bilayer. Cys-38 serves as a coordination point for heme c. Heme b contacts are provided by His-89 and His-103. Transmembrane regions (helical) follow at residues Ala-93–Phe-113, Leu-119–Tyr-139, and Leu-189–Ile-209. Positions 190 and 205 each coordinate heme b.

The protein belongs to the cytochrome b family. PetB subfamily. In terms of assembly, the 4 large subunits of the cytochrome b6-f complex are cytochrome b6, subunit IV (17 kDa polypeptide, PetD), cytochrome f and the Rieske protein, while the 4 small subunits are PetG, PetL, PetM and PetN. The complex functions as a dimer. Heme b is required as a cofactor. It depends on heme c as a cofactor.

The protein resides in the cellular thylakoid membrane. Functionally, component of the cytochrome b6-f complex, which mediates electron transfer between photosystem II (PSII) and photosystem I (PSI), cyclic electron flow around PSI, and state transitions. The protein is Cytochrome b6 of Prochlorococcus marinus (strain MIT 9301).